Here is a 299-residue protein sequence, read N- to C-terminus: GTPase Era (299 aa).

The region spanning 4–171 is the Era-type G domain; that stretch reads KSGFVAILGR…VDILSENLGE (168 aa). A G1 region spans residues 12–19; that stretch reads GRPNVGKS. 12-19 contacts GTP; that stretch reads GRPNVGKS. Residues 38 to 42 are G2; it reads QTTRN. The segment at 59–62 is G3; that stretch reads DTPG. Residues 59 to 63 and 121 to 124 contribute to the GTP site; these read DTPGI and NKID. The tract at residues 121-124 is G4; the sequence is NKID. The tract at residues 150–152 is G5; that stretch reads ISA. Residues 202–280 enclose the KH type-2 domain; the sequence is TREEIPHSVA…FLETWVKVKK (79 aa).

This sequence belongs to the TRAFAC class TrmE-Era-EngA-EngB-Septin-like GTPase superfamily. Era GTPase family. As to quaternary structure, monomer.

The protein localises to the cytoplasm. Its subcellular location is the cell membrane. Its function is as follows. An essential GTPase that binds both GDP and GTP, with rapid nucleotide exchange. Plays a role in 16S rRNA processing and 30S ribosomal subunit biogenesis and possibly also in cell cycle regulation and energy metabolism. This Streptococcus pneumoniae (strain JJA) protein is GTPase Era.